The sequence spans 558 residues: Leucine-rich repeat-containing protein 71 (558 aa).

Residues 1–18 (MSSEPSTTGTSPRTPRPG) are compositionally biased toward low complexity. Disordered stretches follow at residues 1–55 (MSSE…NPEE) and 86–112 (RVQQ…SASC). The span at 28–38 (KKGDRAAKDKT) shows a compositional bias: basic and acidic residues. Over residues 86–99 (RVQQSSVPSASTSE) the composition is skewed to polar residues. LRR repeat units follow at residues 196 to 216 (TLRK…SKLM), 221 to 241 (TIVH…QLLG), 253 to 274 (TLVS…YIAD), and 281 to 302 (SLLW…KLAE). Residues 325–415 (GTQERSRSPS…DAAKAGKGKV (91 aa)) are disordered. Composition is skewed to basic and acidic residues over residues 339–348 (GDSKAEREKS) and 380–391 (KTGEVVKKEEKL).

This is Leucine-rich repeat-containing protein 71 (Lrrc71) from Mus musculus (Mouse).